Here is a 536-residue protein sequence, read N- to C-terminus: Butyrophilin-like protein 9 (536 aa).

An N-terminal signal peptide occupies residues 1–35; that stretch reads MADFSVFLGFLKQIPRCLSIFFTYLLFLQLWEVNS. 2 consecutive Ig-like V-type domains span residues 36 to 149 and 152 to 241; these read DKVW…WELE and GSGS…KEFV. The Extracellular segment spans residues 36–257; that stretch reads DKVWVLGPEE…FLPRMSPWKK (222 aa). Residues Cys-59 and Cys-133 are joined by a disulfide bond. 3 N-linked (GlcNAc...) asparagine glycosylation sites follow: Asn-102, Asn-139, and Asn-224. Cys-173 and Cys-227 are oxidised to a cystine. The chain crosses the membrane as a helical span at residues 258 to 278; it reads AFVGTLVVLPLSLIVLTMLAL. Topologically, residues 279 to 536 are cytoplasmic; sequence RYFYKLRSFQ…PAWAVNEAVS (258 aa). Positions 307-506 constitute a B30.2/SPRY domain; the sequence is DWRRSEGQAE…MTICSLPVRG (200 aa).

Belongs to the immunoglobulin superfamily. BTN/MOG family.

The protein localises to the membrane. The sequence is that of Butyrophilin-like protein 9 (Btnl9) from Mus musculus (Mouse).